Consider the following 404-residue polypeptide: Epoxide hydrolase 1 (404 aa).

Residues 74-96 traverse the membrane as a helical segment; sequence ILVRLLQFYYFVKFSAILFLGFA. One can recognise an AB hydrolase-1 domain in the interval 140–389; the sequence is PLMLFIHGYP…ASHWVQQDEP (250 aa). Asp-215 serves as the catalytic Nucleophile. The Proton donor role is filled by Tyr-327. The active-site Proton acceptor is His-382.

Belongs to the AB hydrolase superfamily. Epoxide hydrolase family.

It is found in the membrane. It carries out the reaction an epoxide + H2O = an ethanediol. It catalyses the reaction 8,9-epoxy-(5Z,11Z,14Z)-eicosatrienoate + H2O = 8,9-dihydroxy-(5Z,11Z,14Z)-eicosatrienoate. The catalysed reaction is 11,12-epoxy-(5Z,8Z,14Z)-eicosatrienoate + H2O = 11,12-dihydroxy-(5Z,8Z,14Z)-eicosatrienoate. The enzyme catalyses 14,15-epoxy-(5Z,8Z,11Z)-eicosatrienoate + H2O = 14,15-dihydroxy-(5Z,8Z,11Z)-eicosatrienoate. It carries out the reaction 12,13-epoxy-(9Z)-octadecenoate + H2O = 12,13-dihydroxy-(9Z)-octadecenoate. It catalyses the reaction 9,10-epoxy-(12Z)-octadecenoate + H2O = 9,10-dihydroxy-(12Z)-octadecenoate. The protein operates within lipid metabolism. Functionally, catalyzes the hydrolysis of epoxide-containing fatty acids. Active against epoxyeicosatrienoic acids (EETs) including 8,9-epoxy-(5Z,11Z,14Z)-eicosatrienoate (8,9-EET), 11,12-epoxy-(5Z,8Z,14Z)-eicosatrienoate (11,12-EET) and 14,15-epoxy-(5Z,8Z,11Z)-eicosatrienoate (14,15-EET) and the linoleic acid metabolites 12,13-epoxy-(9Z)-octadecenoate (12,13-EpOME) and 9,10-epoxy-(12Z)-octadecenoate (9,10-EpOME). These epoxides function as lipid signaling molecules, the enzyme can deplete the supply of the epoxide signal by transforming them into diol species that are more readily eliminated through excretion. The polypeptide is Epoxide hydrolase 1 (Caenorhabditis elegans).